The sequence spans 539 residues: Probable protein kinase UbiB (539 aa).

The region spanning 125-493 is the Protein kinase domain; sequence RFDVEPLASA…RRRQGDRWAL (369 aa). ATP-binding positions include 131–139 and Lys153; that span reads LASASVAQV. The active-site Proton acceptor is the Asp288. Transmembrane regions (helical) follow at residues 495-515 and 517-537; these read LLGA…AEAA and LAAP…YLIV.

Belongs to the ABC1 family. UbiB subfamily.

It is found in the cell inner membrane. It functions in the pathway cofactor biosynthesis; ubiquinone biosynthesis [regulation]. Functionally, is probably a protein kinase regulator of UbiI activity which is involved in aerobic coenzyme Q (ubiquinone) biosynthesis. This is Probable protein kinase UbiB from Pseudomonas putida (strain W619).